The sequence spans 59 residues: Large ribosomal subunit protein uL30 (59 aa).

Belongs to the universal ribosomal protein uL30 family. As to quaternary structure, part of the 50S ribosomal subunit.

The polypeptide is Large ribosomal subunit protein uL30 (Syntrophotalea carbinolica (strain DSM 2380 / NBRC 103641 / GraBd1) (Pelobacter carbinolicus)).